Here is a 407-residue protein sequence, read N- to C-terminus: Elongation factor Tu, chloroplastic (407 aa).

A tr-type G domain is found at K10–E212. The segment at G19–T26 is G1. Residue G19–T26 participates in GTP binding. T26 contributes to the Mg(2+) binding site. A G2 region spans residues G59–N63. Residues D80 to G83 are G3. GTP is bound by residues D80–H84 and N135–D138. Residues N135 to D138 are G4. Positions S173–L175 are G5.

The protein belongs to the TRAFAC class translation factor GTPase superfamily. Classic translation factor GTPase family. EF-Tu/EF-1A subfamily.

The protein localises to the plastid. It is found in the chloroplast. The enzyme catalyses GTP + H2O = GDP + phosphate + H(+). Functionally, GTP hydrolase that promotes the GTP-dependent binding of aminoacyl-tRNA to the A-site of ribosomes during protein biosynthesis. The protein is Elongation factor Tu, chloroplastic (tufA) of Emiliania huxleyi (Coccolithophore).